Here is a 440-residue protein sequence, read N- to C-terminus: Golgi reassembly-stacking protein 1 (440 aa).

A lipid anchor (N-myristoyl glycine) is attached at Gly2. PDZ GRASP-type domains lie at 15–105 (EGFH…FCSF) and 111–199 (QVWH…YGYL). Residues 15–215 (EGFHLHGVQE…PPSYHKKPPG (201 aa)) are GRASP. Positions 18, 20, and 103 each coordinate Zn(2+). Residues 190-202 (LGCGIGYGYLHRI) are essential for interaction with GOLGA2/GM130. 3 disordered regions span residues 205–248 (QPPS…ETGS), 261–301 (PGSS…PVQR), and 327–440 (LPSS…STTE). Over residues 214–239 (PGTPPPSALPLGAPPPDALPPGPTPE) the composition is skewed to pro residues. Thr216 is subject to Phosphothreonine. Low complexity predominate over residues 327–336 (LPSSTELTTT). Positions 337-351 (AVSTSGPEDICSSSS) are enriched in polar residues. Ser362, Ser364, and Ser373 each carry phosphoserine.

Belongs to the GORASP family. Homodimer. Forms higher-order oligomers under interphase but not mitotic conditions. Dimers of the protein on one membrane might be able to interact with dimers on another and so stack cisternae. Interacts with the C-terminus of GOLGA2/GM130 under both mitotic and non-mitotic conditions. The interaction is critical for the correct targeting of both proteins to the cis-Golgi. Interacts with TMED2 and TMED3. In terms of processing, phosphorylated by CDC2/B1 and PLK kinases during mitosis. Phosphorylation cycle correlates with the cisternal stacking cycle. Phosphorylation of the homodimer prevents the association of dimers into higher-order oligomers, leading to cisternal unstacking. Target for caspase-3 cleavage during apoptosis. The cleavage contributes to Golgi fragmentation and occurs very early in the execution phase of apoptosis. Post-translationally, myristoylated.

It is found in the golgi apparatus. The protein resides in the cis-Golgi network membrane. Its subcellular location is the endoplasmic reticulum-Golgi intermediate compartment membrane. In terms of biological role, key structural protein of the Golgi apparatus. The membrane cisternae of the Golgi apparatus adhere to each other to form stacks, which are aligned side by side to form the Golgi ribbon. Acting in concert with GORASP2/GRASP55, is required for the formation and maintenance of the Golgi ribbon, and may be dispensable for the formation of stacks. However, other studies suggest that GORASP1 plays an important role in assembly and membrane stacking of the cisternae, and in the reassembly of Golgi stacks after breakdown during mitosis. Caspase-mediated cleavage of GORASP1 is required for fragmentation of the Golgi during apoptosis. Also mediates, via its interaction with GOLGA2/GM130, the docking of transport vesicles with the Golgi membranes. Mediates ER stress-induced unconventional (ER/Golgi-independent) trafficking of core-glycosylated CFTR to cell membrane. The protein is Golgi reassembly-stacking protein 1 (GORASP1) of Homo sapiens (Human).